We begin with the raw amino-acid sequence, 37 residues long: Large ribosomal subunit protein bL36c (37 aa).

The protein belongs to the bacterial ribosomal protein bL36 family.

It localises to the plastid. The protein localises to the chloroplast. The protein is Large ribosomal subunit protein bL36c of Oltmannsiellopsis viridis (Marine flagellate).